The chain runs to 153 residues: NADPH-dependent 7-cyano-7-deazaguanine reductase (153 aa).

Residues 1 to 26 (MVKIHDGASQLGANVAAPRSPEEATL) form a disordered region. Cys-51 acts as the Thioimide intermediate in catalysis. Residue Asp-58 is the Proton donor of the active site. Residues 73–75 (VES) and 92–93 (HE) each bind substrate.

This sequence belongs to the GTP cyclohydrolase I family. QueF type 1 subfamily.

The protein localises to the cytoplasm. The enzyme catalyses 7-aminomethyl-7-carbaguanine + 2 NADP(+) = 7-cyano-7-deazaguanine + 2 NADPH + 3 H(+). It functions in the pathway tRNA modification; tRNA-queuosine biosynthesis. Functionally, catalyzes the NADPH-dependent reduction of 7-cyano-7-deazaguanine (preQ0) to 7-aminomethyl-7-deazaguanine (preQ1). The polypeptide is NADPH-dependent 7-cyano-7-deazaguanine reductase (Methylocella silvestris (strain DSM 15510 / CIP 108128 / LMG 27833 / NCIMB 13906 / BL2)).